The chain runs to 99 residues: Aspartyl/glutamyl-tRNA(Asn/Gln) amidotransferase subunit C (99 aa).

It belongs to the GatC family. In terms of assembly, heterotrimer of A, B and C subunits.

It carries out the reaction L-glutamyl-tRNA(Gln) + L-glutamine + ATP + H2O = L-glutaminyl-tRNA(Gln) + L-glutamate + ADP + phosphate + H(+). The catalysed reaction is L-aspartyl-tRNA(Asn) + L-glutamine + ATP + H2O = L-asparaginyl-tRNA(Asn) + L-glutamate + ADP + phosphate + 2 H(+). Allows the formation of correctly charged Asn-tRNA(Asn) or Gln-tRNA(Gln) through the transamidation of misacylated Asp-tRNA(Asn) or Glu-tRNA(Gln) in organisms which lack either or both of asparaginyl-tRNA or glutaminyl-tRNA synthetases. The reaction takes place in the presence of glutamine and ATP through an activated phospho-Asp-tRNA(Asn) or phospho-Glu-tRNA(Gln). In Mycolicibacterium vanbaalenii (strain DSM 7251 / JCM 13017 / BCRC 16820 / KCTC 9966 / NRRL B-24157 / PYR-1) (Mycobacterium vanbaalenii), this protein is Aspartyl/glutamyl-tRNA(Asn/Gln) amidotransferase subunit C.